Reading from the N-terminus, the 74-residue chain is Kappa-scoloptoxin(03)-Ssm1a (74 aa).

An N-terminal signal peptide occupies residues 1–23 (MNSSIAILLVMALIMFSLDKSYS). Cystine bridges form between Cys-32–Cys-59, Cys-42–Cys-58, and Cys-45–Cys-68.

The protein belongs to the scoloptoxin-03 family. As to expression, expressed by the venom gland.

The protein localises to the secreted. This toxin inhibits voltage-gated potassium channel currents in DRG neurons (IC(50)=44.2 nM). In vivo, insects injected with this toxin showed signs of neurotoxicity including twitching, paralysis, and body contraction. This chain is Kappa-scoloptoxin(03)-Ssm1a, found in Scolopendra mutilans (Chinese red-headed centipede).